A 465-amino-acid polypeptide reads, in one-letter code: Hydroxyacid-oxoacid transhydrogenase, mitochondrial (465 aa).

Lys-443 carries the post-translational modification N6-acetyllysine. At Ser-450 the chain carries Phosphoserine.

This sequence belongs to the iron-containing alcohol dehydrogenase family. Hydroxyacid-oxoacid transhydrogenase subfamily. Expressed in white and brown adipose tissues, liver, and kidney. Expression is differentiation-dependent during in vitro brown and white adipogenesis.

Its subcellular location is the mitochondrion. The catalysed reaction is (S)-3-hydroxybutanoate + 2-oxoglutarate = (R)-2-hydroxyglutarate + acetoacetate. It catalyses the reaction 4-hydroxybutanoate + 2-oxoglutarate = (R)-2-hydroxyglutarate + succinate semialdehyde. Functionally, catalyzes the cofactor-independent reversible oxidation of gamma-hydroxybutyrate (GHB) to succinic semialdehyde (SSA) coupled to reduction of 2-ketoglutarate (2-KG) to D-2-hydroxyglutarate (D-2-HG). L-3-hydroxybutyrate (L-3-OHB) is also a substrate for HOT when using 2-KG as hydrogen acceptor, resulting in the formation of D-2-HG. This chain is Hydroxyacid-oxoacid transhydrogenase, mitochondrial (Adhfe1), found in Mus musculus (Mouse).